The following is a 516-amino-acid chain: Delta(24)-sterol reductase (516 aa).

The signal sequence occupies residues 1–22 (MEPAVSLAVCALLFLLWVRVKG). The Lumenal portion of the chain corresponds to 23–31 (LEFVLIHQR). A helical transmembrane segment spans residues 32-52 (WVFVCLFLLPLSLIFDIYYYV). Residues 53-516 (RAWVVFKLSS…YDKICKAARH (464 aa)) are Cytoplasmic-facing. Residues 58 to 234 (FKLSSAPRLH…VAAEIRIIPA (177 aa)) form the FAD-binding PCMH-type domain. FAD is bound at residue 163–175 (TVGGLIMGTGIES).

This sequence belongs to the FAD-binding oxidoreductase/transferase type 4 family. As to quaternary structure, interacts with DHCR7; this interaction regulates DHCR7 activity. Requires FAD as cofactor.

It localises to the endoplasmic reticulum membrane. Its subcellular location is the golgi apparatus membrane. The enzyme catalyses cholesterol + NADP(+) = desmosterol + NADPH + H(+). It catalyses the reaction lanosterol + NADPH + H(+) = 24,25-dihydrolanosterol + NADP(+). The catalysed reaction is 5alpha-cholest-8-en-3beta-ol + NADP(+) = zymosterol + NADPH + H(+). It functions in the pathway steroid biosynthesis; cholesterol biosynthesis. In terms of biological role, catalyzes the reduction of the delta-24 double bond of sterol intermediates during cholesterol biosynthesis. In addition to its cholesterol-synthesizing activity, can protect cells from oxidative stress by reducing caspase 3 activity during apoptosis induced by oxidative stress. Also protects against amyloid-beta peptide-induced apoptosis. The chain is Delta(24)-sterol reductase (Dhcr24) from Rattus norvegicus (Rat).